A 32-amino-acid polypeptide reads, in one-letter code: Yop proteins translocation protein A (32 aa).

The polypeptide is Yop proteins translocation protein A (yscA) (Yersinia enterocolitica serotype O:8 / biotype 1B (strain NCTC 13174 / 8081)).